The primary structure comprises 150 residues: Large ribosomal subunit protein bL9 (150 aa).

It belongs to the bacterial ribosomal protein bL9 family.

Functionally, binds to the 23S rRNA. In Photorhabdus laumondii subsp. laumondii (strain DSM 15139 / CIP 105565 / TT01) (Photorhabdus luminescens subsp. laumondii), this protein is Large ribosomal subunit protein bL9.